A 473-amino-acid chain; its full sequence is ATP synthase subunit beta (473 aa).

Position 156–163 (156–163 (GGAGVGKT)) interacts with ATP.

It belongs to the ATPase alpha/beta chains family. F-type ATPases have 2 components, CF(1) - the catalytic core - and CF(0) - the membrane proton channel. CF(1) has five subunits: alpha(3), beta(3), gamma(1), delta(1), epsilon(1). CF(0) has three main subunits: a(1), b(2) and c(9-12). The alpha and beta chains form an alternating ring which encloses part of the gamma chain. CF(1) is attached to CF(0) by a central stalk formed by the gamma and epsilon chains, while a peripheral stalk is formed by the delta and b chains.

It is found in the cell inner membrane. The enzyme catalyses ATP + H2O + 4 H(+)(in) = ADP + phosphate + 5 H(+)(out). In terms of biological role, produces ATP from ADP in the presence of a proton gradient across the membrane. The catalytic sites are hosted primarily by the beta subunits. The polypeptide is ATP synthase subunit beta (Desulfovibrio desulfuricans (strain ATCC 27774 / DSM 6949 / MB)).